A 791-amino-acid polypeptide reads, in one-letter code: Ataxin-2 homolog (791 aa).

Polar residues predominate over residues M1–Q22. 8 disordered regions span residues M1–S28, R60–V100, R112–L134, T235–Q311, S326–G423, K452–S505, N613–S634, and P707–P791. Residues S76–S96 show a composition bias toward low complexity. 2 stretches are compositionally biased toward basic and acidic residues: residues R112–P125 and N243–H256. Over residues S326–S337 the composition is skewed to polar residues. 2 stretches are compositionally biased toward basic and acidic residues: residues D360–K371 and S395–T418. Low complexity predominate over residues S473 to S486. Polar residues predominate over residues N487–V497. Composition is skewed to low complexity over residues S715 to N725 and N734 to A760. The segment covering D774–P791 has biased composition (basic and acidic residues).

Belongs to the ataxin-2 family. In terms of assembly, interacts with mkt1.

It is found in the cytoplasm. In terms of biological role, involved in post-transcriptional regulation of gene expression, probably by association with mkt1. The protein is Ataxin-2 homolog of Schizosaccharomyces pombe (strain 972 / ATCC 24843) (Fission yeast).